A 1378-amino-acid polypeptide reads, in one-letter code: MCDMLDNKLGNRLRVDFSNISKQIEIPNLLQLQKKSFDYFLNLDNGESGIEKVFKSIFPIHDPQNRLSLEYVSSEIGKPKYTIRECMERGLTYSVNLKMKIRLTLHEKDEKTGEKVGVKDIKEQEIYIREIPLMTDRVSFIINGVERVVVNQLHRSPGVIFKEEESSTVANKLVYTAQIIPDRGSWLYFEYDAKDVLYVRINKRRKVPVTMLFRALGYKKQDIIKLFYPIQTIHVKKDKFLTEFNPNDFMDRIEYDIKDEKGKIVHQAGKRLTKKKAEQLIKDGLKWIEYPVEILLNRYLANPIIDKESGEVLFDSLTLLDESKLAKIKEQKSFDIANDLANGVDAAIINSFAQDGETLKLLKQSENIDDENDLAAIRIYKVMRPGEPVVKDAAKAFVNDLFFNPERYDLTKVGRMKMNHKLGLEVPEYVTVLTNEDIIKTAKYLIKVKNGKGHIDDRDHLGNRRIRSIGELLANELHLGLAKMQKAIRDKFTSLNADLDKVMPYDLINPKMITTTIIEFFTGGQLSQFMDQTNPLSEVTHKRRLSALGEGGLVKERAGFEVRDVHATHYGRICPVETPEGQNIGLINTLSTYAKVNELGFVEAPYRKVVNGKVTNEVVYLTATQEEGLFIAPASTKVDAKGNIVEEFVEARQDGETILARREEVQLIDLCSGMVVGVAASLIPFLEHDDANRALMGSNMQRQAVPLLTASAPIVGTGMEQIIARDAWEAVKAKRGGVVEKVDNKSIFILGEDDKGPFIDHYTMEKNLRTNQNTNYIQHPIVKKGDIVKAGQIIADGPSMDQGELAIGKNALIAFMPWNGYNYEDAIVVSERIIREDTFTSVHIYEKEIEARELKDGIEEITKDIPNVKEEDVAHLDESGIAKIGTHIKPGMILVGKVSPKGEVKPTPEERLLRAIFGEKAGHVVNKSLYATASLEGVVVDVKIFTKKGYEKDDRAIKSYDKEKMALEKEHHDRLLMMDREEMLRVCALLSKASLNSDQKIGDKNYKKGQTADISELEKINRFTLTTLIKAYSKEIQKEYDDLKNHFQNEKKKLKAEHDEKLEILEKDDILPSGVIKLVKVYIATKRKLKVGDKMAGRHGNKGIVSTIVPEVDMPYLPNGKSVDIALNPLGVPSRMNIGQILESHLGLVGLRLGDQIQEIFDRKQKDFLKELRAKMLEICSIPRLANEKEFIKSLSDEELLNYARDWSKGVKFSTPVFEGVNIEEFSKLFKMAKIDMDGKTELYDGRTGEKIAERVHVGCMYMLKLHHLVDEKVHARSTGPYSLVTQQPVGGKALFGGQRFGEMEVWALEAYGAAHTLREMLTIKSDDVEGRFSAYKALTKGENVPATGIPETFFVLTNELKSLALDVEIFDKDEDNE.

The protein belongs to the RNA polymerase beta chain family. The RNAP catalytic core consists of 2 alpha, 1 beta, 1 beta' and 1 omega subunit. When a sigma factor is associated with the core the holoenzyme is formed, which can initiate transcription.

It carries out the reaction RNA(n) + a ribonucleoside 5'-triphosphate = RNA(n+1) + diphosphate. Its function is as follows. DNA-dependent RNA polymerase catalyzes the transcription of DNA into RNA using the four ribonucleoside triphosphates as substrates. This chain is DNA-directed RNA polymerase subunit beta, found in Campylobacter jejuni (strain RM1221).